The following is a 324-amino-acid chain: Adenine deaminase (324 aa).

His-11, His-13, and His-189 together coordinate Zn(2+). Glu-192 functions as the Proton donor in the catalytic mechanism. A Zn(2+)-binding site is contributed by Asp-270. Position 271 (Asp-271) interacts with substrate.

Belongs to the metallo-dependent hydrolases superfamily. Adenosine and AMP deaminases family. Adenine deaminase type 2 subfamily. The cofactor is Zn(2+).

It carries out the reaction adenine + H2O + H(+) = hypoxanthine + NH4(+). Its function is as follows. Catalyzes the hydrolytic deamination of adenine to hypoxanthine. Plays an important role in the purine salvage pathway and in nitrogen catabolism. The chain is Adenine deaminase from Rhizobium meliloti (strain 1021) (Ensifer meliloti).